The primary structure comprises 467 residues: Putative sulfoquinovose importer (467 aa).

Transmembrane regions (helical) follow at residues 17–37 (IAYG…TLYL), 54–74 (IIFL…GFLL), 88–108 (PFIL…FIAT), 121–141 (ALFM…GAMI), 160–180 (GGAT…QSLF), 185–205 (VGYA…MMLC), 238–258 (LLVL…KLAI), 275–295 (WMGF…PLTV), 303–323 (VYLA…FWGS), 325–345 (SFTF…VNSL), 379–399 (ISAA…GYVP), and 414–434 (LIFI…GFFY).

This sequence belongs to the sodium:galactoside symporter (TC 2.A.2) family.

The protein resides in the cell inner membrane. In terms of biological role, could be involved in sulfoquinovose import. The protein is Putative sulfoquinovose importer (yihO) of Escherichia coli (strain K12).